A 348-amino-acid chain; its full sequence is Histidinol-phosphate aminotransferase (348 aa).

Residues 1–31 (MLPTRDCVRQTPAYTPGEQPQTAGFTKLNTN) form a disordered region. Residues 18 to 31 (EQPQTAGFTKLNTN) show a composition bias toward polar residues. K207 is subject to N6-(pyridoxal phosphate)lysine.

This sequence belongs to the class-II pyridoxal-phosphate-dependent aminotransferase family. Histidinol-phosphate aminotransferase subfamily. Homodimer. Pyridoxal 5'-phosphate is required as a cofactor.

It carries out the reaction L-histidinol phosphate + 2-oxoglutarate = 3-(imidazol-4-yl)-2-oxopropyl phosphate + L-glutamate. It functions in the pathway amino-acid biosynthesis; L-histidine biosynthesis; L-histidine from 5-phospho-alpha-D-ribose 1-diphosphate: step 7/9. This chain is Histidinol-phosphate aminotransferase, found in Microcystis aeruginosa (strain NIES-843 / IAM M-2473).